The primary structure comprises 294 residues: MPATRIDGKAIAAKLREDVAAEVARLKRDHDLTPGLAVVLIGNDPASEVYVGSKTKQTVAAGMASFEHKLAADTPQAQVLALIARLNRDPAVHGILVQLPLPKGLDATIIVNAIDPAKDVDGLHPVNAGRLASGLPALTPCTPLGCIILAKTVHASLEGMNAIVLGRSNLVGRPLVQLLLNENATVTIAHSRTRNLPALCRQADLVFAAVGRPEMVKGDWIKPGATVIDVGINRLPGEGGKSRLVGDVAYAEAMEVAGAVTPVPGGVGQMTVACLLVNTVRAACAIKGLSAPSV.

Residues 166-168 (GRS), serine 191, and isoleucine 232 contribute to the NADP(+) site.

This sequence belongs to the tetrahydrofolate dehydrogenase/cyclohydrolase family. Homodimer.

The enzyme catalyses (6R)-5,10-methylene-5,6,7,8-tetrahydrofolate + NADP(+) = (6R)-5,10-methenyltetrahydrofolate + NADPH. It catalyses the reaction (6R)-5,10-methenyltetrahydrofolate + H2O = (6R)-10-formyltetrahydrofolate + H(+). It participates in one-carbon metabolism; tetrahydrofolate interconversion. Catalyzes the oxidation of 5,10-methylenetetrahydrofolate to 5,10-methenyltetrahydrofolate and then the hydrolysis of 5,10-methenyltetrahydrofolate to 10-formyltetrahydrofolate. This is Bifunctional protein FolD from Afipia carboxidovorans (strain ATCC 49405 / DSM 1227 / KCTC 32145 / OM5) (Oligotropha carboxidovorans).